The primary structure comprises 577 residues: Arginine--tRNA ligase (577 aa).

Residues 122–132 (PNVAKEMHVGH) carry the 'HIGH' region motif.

This sequence belongs to the class-I aminoacyl-tRNA synthetase family. As to quaternary structure, monomer.

The protein localises to the cytoplasm. The catalysed reaction is tRNA(Arg) + L-arginine + ATP = L-arginyl-tRNA(Arg) + AMP + diphosphate. The sequence is that of Arginine--tRNA ligase from Edwardsiella ictaluri (strain 93-146).